We begin with the raw amino-acid sequence, 535 residues long: Doublesex- and mab-3-related transcription factor A2 (535 aa).

Positions 69 to 116 (CARCRNHGVVSALKGHKRYCRWKDCLCAKCTLIAERQRVMAAQVALRR) form a DNA-binding region, DM. Residues 200 to 315 (LQAGRPGSPQ…GGPGPRQRTP (116 aa)) are disordered. Positions 313 to 348 (RTPLDILTRVFPGHRRGVLELVLQGCGGDVVQAIEQ) constitute a DMA domain.

Belongs to the DMRT family.

The protein resides in the nucleus. In terms of biological role, may be involved in sexual development. The chain is Doublesex- and mab-3-related transcription factor A2 (DMRTA2) from Bos taurus (Bovine).